A 562-amino-acid polypeptide reads, in one-letter code: Protein FAM83D-A (562 aa).

The segment at 424–471 (ITTQTTETSQCTTQTPAPTSSVARLSNSSNSSSSSFSSTSITSTGSNC) is disordered. Over residues 425 to 471 (TTQTTETSQCTTQTPAPTSSVARLSNSSNSSSSSFSSTSITSTGSNC) the composition is skewed to low complexity.

Belongs to the FAM83 family.

Its subcellular location is the cytoplasm. The protein localises to the cytoskeleton. It is found in the spindle. The protein resides in the spindle pole. Its function is as follows. May regulate cell proliferation, growth, migration and epithelial to mesenchymal transition. May also be important for proper chromosome congression and alignment during mitosis. This Xenopus laevis (African clawed frog) protein is Protein FAM83D-A.